The sequence spans 374 residues: Chaperone protein DnaJ (374 aa).

A J domain is found at Asp5–Gly69. The CR-type zinc-finger motif lies at Gly141–Arg223. Residues Cys154, Cys157, Cys171, Cys174, Cys197, Cys200, Cys211, and Cys214 each contribute to the Zn(2+) site. CXXCXGXG motif repeat units lie at residues Cys154–Gly161, Cys171–Gly178, Cys197–Gly204, and Cys211–Gly218.

The protein belongs to the DnaJ family. As to quaternary structure, homodimer. It depends on Zn(2+) as a cofactor.

The protein localises to the cytoplasm. Participates actively in the response to hyperosmotic and heat shock by preventing the aggregation of stress-denatured proteins and by disaggregating proteins, also in an autonomous, DnaK-independent fashion. Unfolded proteins bind initially to DnaJ; upon interaction with the DnaJ-bound protein, DnaK hydrolyzes its bound ATP, resulting in the formation of a stable complex. GrpE releases ADP from DnaK; ATP binding to DnaK triggers the release of the substrate protein, thus completing the reaction cycle. Several rounds of ATP-dependent interactions between DnaJ, DnaK and GrpE are required for fully efficient folding. Also involved, together with DnaK and GrpE, in the DNA replication of plasmids through activation of initiation proteins. The sequence is that of Chaperone protein DnaJ from Mesoplasma florum (strain ATCC 33453 / NBRC 100688 / NCTC 11704 / L1) (Acholeplasma florum).